The primary structure comprises 306 residues: Porphobilinogen deaminase (306 aa).

Cys239 is modified (S-(dipyrrolylmethanemethyl)cysteine).

This sequence belongs to the HMBS family. Monomer. Dipyrromethane is required as a cofactor.

The catalysed reaction is 4 porphobilinogen + H2O = hydroxymethylbilane + 4 NH4(+). It participates in porphyrin-containing compound metabolism; protoporphyrin-IX biosynthesis; coproporphyrinogen-III from 5-aminolevulinate: step 2/4. Functionally, tetrapolymerization of the monopyrrole PBG into the hydroxymethylbilane pre-uroporphyrinogen in several discrete steps. This Helicobacter pylori (strain G27) protein is Porphobilinogen deaminase.